Here is a 234-residue protein sequence, read N- to C-terminus: tRNA1(Val) (adenine(37)-N6)-methyltransferase (234 aa).

It belongs to the methyltransferase superfamily. tRNA (adenine-N(6)-)-methyltransferase family.

The protein resides in the cytoplasm. The enzyme catalyses adenosine(37) in tRNA1(Val) + S-adenosyl-L-methionine = N(6)-methyladenosine(37) in tRNA1(Val) + S-adenosyl-L-homocysteine + H(+). Functionally, specifically methylates the adenine in position 37 of tRNA(1)(Val) (anticodon cmo5UAC). This chain is tRNA1(Val) (adenine(37)-N6)-methyltransferase, found in Pedobacter heparinus (strain ATCC 13125 / DSM 2366 / CIP 104194 / JCM 7457 / NBRC 12017 / NCIMB 9290 / NRRL B-14731 / HIM 762-3).